Here is a 593-residue protein sequence, read N- to C-terminus: Aspartate--tRNA(Asp/Asn) ligase (593 aa).

Residue E172 coordinates L-aspartate. The aspartate stretch occupies residues 196 to 199; sequence QLFK. R218 is an L-aspartate binding site. ATP contacts are provided by residues 218–220 and Q227; that span reads RDE. H450 is an L-aspartate binding site. E484 is a binding site for ATP. Position 491 (R491) interacts with L-aspartate. 536–539 lines the ATP pocket; it reads GLDR.

Belongs to the class-II aminoacyl-tRNA synthetase family. Type 1 subfamily. Homodimer.

It localises to the cytoplasm. It catalyses the reaction tRNA(Asx) + L-aspartate + ATP = L-aspartyl-tRNA(Asx) + AMP + diphosphate. Its function is as follows. Aspartyl-tRNA synthetase with relaxed tRNA specificity since it is able to aspartylate not only its cognate tRNA(Asp) but also tRNA(Asn). Reaction proceeds in two steps: L-aspartate is first activated by ATP to form Asp-AMP and then transferred to the acceptor end of tRNA(Asp/Asn). The sequence is that of Aspartate--tRNA(Asp/Asn) ligase from Nitrosomonas eutropha (strain DSM 101675 / C91 / Nm57).